Consider the following 236-residue polypeptide: 5'-methylthioadenosine/S-adenosylhomocysteine nucleosidase (236 aa).

Glu-12 acts as the Proton acceptor in catalysis. Substrate-binding positions include Gly-78, Ile-153, and 174–175; that span reads ME. Residue Asp-198 is the Proton donor of the active site.

The protein belongs to the PNP/UDP phosphorylase family. MtnN subfamily.

It carries out the reaction S-adenosyl-L-homocysteine + H2O = S-(5-deoxy-D-ribos-5-yl)-L-homocysteine + adenine. The enzyme catalyses S-methyl-5'-thioadenosine + H2O = 5-(methylsulfanyl)-D-ribose + adenine. The catalysed reaction is 5'-deoxyadenosine + H2O = 5-deoxy-D-ribose + adenine. It functions in the pathway amino-acid biosynthesis; L-methionine biosynthesis via salvage pathway; S-methyl-5-thio-alpha-D-ribose 1-phosphate from S-methyl-5'-thioadenosine (hydrolase route): step 1/2. Catalyzes the irreversible cleavage of the glycosidic bond in both 5'-methylthioadenosine (MTA) and S-adenosylhomocysteine (SAH/AdoHcy) to adenine and the corresponding thioribose, 5'-methylthioribose and S-ribosylhomocysteine, respectively. Also cleaves 5'-deoxyadenosine, a toxic by-product of radical S-adenosylmethionine (SAM) enzymes, into 5-deoxyribose and adenine. This Shewanella baltica (strain OS223) protein is 5'-methylthioadenosine/S-adenosylhomocysteine nucleosidase.